A 389-amino-acid chain; its full sequence is Cellobiose 2-epimerase (389 aa).

Belongs to the cellobiose 2-epimerase family.

It is found in the cytoplasm. The catalysed reaction is D-cellobiose = beta-D-glucosyl-(1-&gt;4)-D-mannopyranose. With respect to regulation, enhanced by Mg(2+) and Ca(2+) ions, ethylenediaminetetraacetic acid, ethylene glycol tetraacetic acid and citrate. Inhibited by Al(3+), Fe(3+), Co(2+), Cu(2+), Zn(2+), Pb(2+) and Ag(+) ions, iodoacetate, 4-chloromercuribenzoate and N-bromosuccinimide. Functionally, catalyzes the reversible epimerization of cellobiose to 4-O-beta-D-glucopyranosyl-D-mannose (Glc-Man). Can also epimerize cellotriose to Glc-Glc-Man, cellotetraose to Glc-Glc-Glc-Man, and lactose to epilactose. The protein is Cellobiose 2-epimerase (ce-ne1) of Ruminococcus albus.